The following is a 68-amino-acid chain: Large ribosomal subunit protein uL30 (68 aa).

This sequence belongs to the universal ribosomal protein uL30 family. In terms of assembly, part of the 50S ribosomal subunit.

The polypeptide is Large ribosomal subunit protein uL30 (Bartonella henselae (strain ATCC 49882 / DSM 28221 / CCUG 30454 / Houston 1) (Rochalimaea henselae)).